The primary structure comprises 120 residues: Small ribosomal subunit protein eS17 (120 aa).

It belongs to the eukaryotic ribosomal protein eS17 family. Component of the small ribosomal subunit.

The protein localises to the cytoplasm. The polypeptide is Small ribosomal subunit protein eS17 (RPS17) (Encephalitozoon cuniculi (strain GB-M1) (Microsporidian parasite)).